The primary structure comprises 454 residues: Bifunctional protein GlmU (454 aa).

The tract at residues 1 to 226 (MSLDIVILAA…AMEVQGANDR (226 aa)) is pyrophosphorylase. UDP-N-acetyl-alpha-D-glucosamine contacts are provided by residues 8–11 (LAAG), Lys-22, Gln-73, 78–79 (GT), 99–101 (YGD), Gly-136, Glu-151, Asn-166, and Asn-224. Asp-101 serves as a coordination point for Mg(2+). A Mg(2+)-binding site is contributed by Asn-224. Residues 227 to 247 (LQLAQLERHYQSRVARRLMAQ) form a linker region. The tract at residues 248–454 (GVTLRDPARF…GWQRPTKQKK (207 aa)) is N-acetyltransferase. Arg-330 and Lys-348 together coordinate UDP-N-acetyl-alpha-D-glucosamine. Residue His-360 is the Proton acceptor of the active site. UDP-N-acetyl-alpha-D-glucosamine contacts are provided by Tyr-363 and Asn-374. Residues Ala-377, 383-384 (NY), Ser-402, Ala-420, and Arg-437 contribute to the acetyl-CoA site.

This sequence in the N-terminal section; belongs to the N-acetylglucosamine-1-phosphate uridyltransferase family. In the C-terminal section; belongs to the transferase hexapeptide repeat family. As to quaternary structure, homotrimer. Mg(2+) serves as cofactor.

It localises to the cytoplasm. It catalyses the reaction alpha-D-glucosamine 1-phosphate + acetyl-CoA = N-acetyl-alpha-D-glucosamine 1-phosphate + CoA + H(+). The catalysed reaction is N-acetyl-alpha-D-glucosamine 1-phosphate + UTP + H(+) = UDP-N-acetyl-alpha-D-glucosamine + diphosphate. Its pathway is nucleotide-sugar biosynthesis; UDP-N-acetyl-alpha-D-glucosamine biosynthesis; N-acetyl-alpha-D-glucosamine 1-phosphate from alpha-D-glucosamine 6-phosphate (route II): step 2/2. The protein operates within nucleotide-sugar biosynthesis; UDP-N-acetyl-alpha-D-glucosamine biosynthesis; UDP-N-acetyl-alpha-D-glucosamine from N-acetyl-alpha-D-glucosamine 1-phosphate: step 1/1. It functions in the pathway bacterial outer membrane biogenesis; LPS lipid A biosynthesis. Functionally, catalyzes the last two sequential reactions in the de novo biosynthetic pathway for UDP-N-acetylglucosamine (UDP-GlcNAc). The C-terminal domain catalyzes the transfer of acetyl group from acetyl coenzyme A to glucosamine-1-phosphate (GlcN-1-P) to produce N-acetylglucosamine-1-phosphate (GlcNAc-1-P), which is converted into UDP-GlcNAc by the transfer of uridine 5-monophosphate (from uridine 5-triphosphate), a reaction catalyzed by the N-terminal domain. This chain is Bifunctional protein GlmU, found in Azotobacter vinelandii (strain DJ / ATCC BAA-1303).